A 505-amino-acid polypeptide reads, in one-letter code: Flagellin (505 aa).

The protein belongs to the bacterial flagellin family.

The protein localises to the secreted. Its subcellular location is the bacterial flagellum. Flagellin is the subunit protein which polymerizes to form the filaments of bacterial flagella. This is Flagellin (fliC) from Salmonella derby.